The sequence spans 464 residues: Lysosomal proton-coupled steroid conjugate and bile acid symporter SLC46A3 (464 aa).

Residues 1–26 (MRKVLLVEPVIFIYIFASSLTSPVVQ) form the signal peptide. Topologically, residues 27–71 (QFIYRKLWEEEYNSTAISSDNSSHCERNKSSPTYVMEKAIQEKTS) are extracellular. Residues asparagine 39, asparagine 47, and asparagine 54 are each glycosylated (N-linked (GlcNAc...) asparagine). A helical membrane pass occupies residues 72-92 (FFNMQLDLTGAVPSLIVAFII). Residues 93–104 (VANGDHQGRKKS) are Cytoplasmic-facing. The chain crosses the membrane as a helical span at residues 105-125 (LVLPSIGALIADIFLTIVSYF). At 126-130 (SWPTS) the chain is on the extracellular side. Residues 131-151 (VLFLATFISGLFGSMATFLGG) form a helical membrane-spanning segment. Residues 152–171 (GFAYIADQCHDEKQKTTRIA) are Cytoplasmic-facing. The chain crosses the membrane as a helical span at residues 172–192 (VIDLIFGVVSGLAGLSSGYFL). At 193 to 198 (REMGFT) the chain is on the extracellular side. Residues 199–219 (WTFATASLLHVVNIIYITFFL) form a helical membrane-spanning segment. At 220 to 259 (QDTVHISEFQQQAPLSYKEHLKETFSGVYMLFKTAPSKKR) the chain is on the cytoplasmic side. Residues 260 to 280 (ILIIVLLFIFMTYLFTMFGGS) traverse the membrane as a helical segment. The Extracellular portion of the chain corresponds to 281–296 (SLFTLYELDEPLCWTE). The chain crosses the membrane as a helical span at residues 297–317 (VYIGYGAAAFTSISLTSFLGV). Residues 318-326 (YLFSKCLKD) are Cytoplasmic-facing. The helical transmembrane segment at 327 to 347 (IYIVFIGIFSYIGGIVMAAFA) threads the bilayer. Topologically, residues 348 to 349 (KT) are extracellular. The chain crosses the membrane as a helical span at residues 350–370 (TLLMFLVRVPSLFSIMPIPVL). The Cytoplasmic segment spans residues 371–384 (RSMLSKVVLPSEQG). Residues 385 to 405 (AVFACIACLEVLTGTISLSVF) traverse the membrane as a helical segment. The Extracellular portion of the chain corresponds to 406 to 418 (NVIYAATVAWFSG). The chain crosses the membrane as a helical span at residues 419-439 (FSFLLSASLCLIPLGVLCWLL). Residues 440–464 (CTSWNGEDLALLVPEEVSSIDSVDS) are Cytoplasmic-facing.

This sequence belongs to the major facilitator superfamily. SLC46A family.

The protein localises to the lysosome membrane. It catalyses the reaction estrone 3-sulfate(out) + n H(+)(out) = estrone 3-sulfate(in) + n H(+)(in). The catalysed reaction is 25-hydroxyvitamin D3 sulfate(out) + n H(+)(out) = 25-hydroxyvitamin D3 sulfate(in) + n H(+)(in). It carries out the reaction cholate(out) + n H(+)(out) = cholate(in) + n H(+)(in). The enzyme catalyses glycocholate(out) + n H(+)(out) = glycocholate(in) + n H(+)(in). It catalyses the reaction taurocholate(out) + n H(+)(out) = taurocholate(in) + n H(+)(in). The catalysed reaction is dehydroepiandrosterone 3-sulfate(out) + n H(+)(out) = dehydroepiandrosterone 3-sulfate(in) + n H(+)(in). Functionally, lysosomal proton-coupled steroid conjugate and bile acid transporter. Preferentially recognizes lipophilic steroid conjugates or bile acis as endogenous substrates and seems to mediate escape from lysosomes to the cytoplasm. Modulates hepatic cytosolic copper homeostasis, maybe acting as a lysosomal copper transporter and sequestering copper ions in the lysosome. This chain is Lysosomal proton-coupled steroid conjugate and bile acid symporter SLC46A3 (SLC46A3), found in Gallus gallus (Chicken).